Here is a 316-residue protein sequence, read N- to C-terminus: Acetaldehyde dehydrogenase 1 (316 aa).

Residue 12–15 (SGNI) coordinates NAD(+). The active-site Acyl-thioester intermediate is the cysteine 132. NAD(+) contacts are provided by residues 163 to 171 (SAGPGTRAN) and asparagine 291.

It belongs to the acetaldehyde dehydrogenase family.

It catalyses the reaction acetaldehyde + NAD(+) + CoA = acetyl-CoA + NADH + H(+). The polypeptide is Acetaldehyde dehydrogenase 1 (Pseudomonas putida (strain ATCC 700007 / DSM 6899 / JCM 31910 / BCRC 17059 / LMG 24140 / F1)).